Here is a 512-residue protein sequence, read N- to C-terminus: Maturase K (512 aa).

The protein belongs to the intron maturase 2 family. MatK subfamily.

It localises to the plastid. The protein resides in the chloroplast. In terms of biological role, usually encoded in the trnK tRNA gene intron. Probably assists in splicing its own and other chloroplast group II introns. This Erythranthe guttata (Yellow monkey flower) protein is Maturase K.